Consider the following 588-residue polypeptide: MQCIPKKTFMAMLRIPEVRSNLAAYLRTALMVQEVKNHDDMVHLKALSSEENEDFEICIPGGTYLELFRNPVLRSHLSAMERSYKFPGRFLSEEVDSRDLIPESEKRSLATLAKNGDLPITIQERESDNDDEEKRSASSSDNVGSLHELFDEVSYRRRTPEIYDYLTEQDPEVLEYSPDKRNVGSLARDFALPTGRRHIASVARDHGLPSGKRNVGSLARQSMLPLSGKRNVASLARYYMLPQSGKRNVAALARDSSLPYGKRYLGSLARSGSYPTRDYDEGKRSIASLARSGDWPSVAKRGRMTSGRIMARVLNRRYGRSLSDDREAPSEPLDLQQLIRQGNSEGKENEWQATPFTVSEDLDEGKAKNRSNRRIEASQTRHKRQIDFSDEYPLPVMQNNMLDYEDMMEAIADHYPNAEKRFMGQTVSQPPLRVFRRVLFSYLDVMSTVFCRTCNQVEPHLLQTEKIYHIYVCQYQQIYQPHHVKDNPNTNEPTTMYNHYVQKKCSPMSSSSTHGIITVVRENPADGSSSNYTPDASTRSLRPIFTPKTRYLQSLHGDCRHGFKRFLLLPDIDNFLRTSNSHIAPRSM.

Positions 1 to 179 (MQCIPKKTFM…DPEVLEYSPD (179 aa)) are excised as a propeptide. Residues 115-143 (NGDLPITIQERESDNDDEEKRSASSSDNV) form a disordered region. T194 carries the post-translational modification Threonine amide. S210, S227, and S244 each carry serine amide. Tyrosine amide is present on Y260. A Glutamic acid 1-amide modification is found at E281. A propeptide spanning residues 285–299 (SIASLARSGDWPSVA) is cleaved from the precursor. At Y318 the chain carries Tyrosine amide. A propeptide spanning residues 321–588 (SLSDDREAPS…SNSHIAPRSM (268 aa)) is cleaved from the precursor. The tract at residues 342–382 (GNSEGKENEWQATPFTVSEDLDEGKAKNRSNRRIEASQTRH) is disordered.

Its subcellular location is the secreted. The sequence is that of Neuropeptide-like 1 from Camponotus floridanus (Florida carpenter ant).